The sequence spans 308 residues: Uridine diphosphate glucose pyrophosphatase NUDT22 (308 aa).

Positions 56, 86, 138, 143, 150, 155, and 157 each coordinate substrate. The region spanning 117–284 (ADPLGVGAAL…KGAILLYNRH (168 aa)) is the Nudix hydrolase domain. A Nudix box motif is present at residues 174-195 (GLLVVRELFSSVLQEICDEVNL). Mg(2+) contacts are provided by Glu188 and Glu192. Position 273 (Ser273) interacts with substrate.

Belongs to the Nudix hydrolase family. Mg(2+) is required as a cofactor.

The enzyme catalyses UDP-sugar + H2O = UMP + alpha-D-aldose 1-phosphate.. In terms of biological role, hydrolyzes UDP-glucose to glucose 1-phosphate and UMP and UDP-galactose to galactose 1-phosphate and UMP. Preferred substrate is UDP-glucose. This Mus musculus (Mouse) protein is Uridine diphosphate glucose pyrophosphatase NUDT22 (Nudt22).